Consider the following 404-residue polypeptide: Keratin, type I microfibrillar, 47.6 kDa (404 aa).

The segment at 1 to 56 (MSFNFCLPNLSFRSSCSSRPCVPSSCCGTTLPGACNIPASVGSCNWFCEGSFNGNE) is head. Residues 56 to 367 (EKETMQFLND…GLLDSEDCKL (312 aa)) form the IF rod domain. Residues 57 to 91 (KETMQFLNDRLASYLEKVRQLERENAELERRILER) form a coil 1A region. Positions 92–102 (SQQQEPLVCPN) are linker 1. The interval 103–203 (YQSYFRTIEE…HEQEVNTLRS (101 aa)) is coil 1B. A linker 12 region spans residues 204–219 (QLGDRLNVEVDAAPTV). The tract at residues 220–363 (DLNHVLNETR…NTYRGLLDSE (144 aa)) is coil 2. Positions 364–404 (DCKLPCNPCATTNTCGKPIGPCISNPCVSRTRCGPCNTFVH) are tail.

The protein belongs to the intermediate filament family.

Its function is as follows. Wool microfibrillar keratin. The protein is Keratin, type I microfibrillar, 47.6 kDa of Ovis aries (Sheep).